Consider the following 1022-residue polypeptide: Sodium-dependent transporter snf-12 (1022 aa).

The Cytoplasmic portion of the chain corresponds to 1 to 165 (MNGEWKSALR…RRELWRTQKD (165 aa)). Residues 166–185 (FFLSCLGFMVGVGHTMRFPA) form a helical membrane-spanning segment. The Extracellular segment spans residues 186-192 (KVYQHGG). A helical membrane pass occupies residues 193-213 (GVFFIPYLFSLIFFGLPLVFL). Over 214 to 241 (HLSLGQYTGQAANTAFQRLMPIGSGVGW) the chain is Cytoplasmic. Residues 242-262 (ALVVIAIPVAVYYNIIVAWAI) form a helical membrane-spanning segment. The Extracellular portion of the chain corresponds to 263–337 (HYFFQSAKGL…DFALGPLQSH (75 aa)). Residues 338–358 (LVLSLAAAWLLVFFGVFKGLG) form a helical membrane-spanning segment. Serine 359 is a topological domain (cytoplasmic). The chain crosses the membrane as a helical span at residues 360 to 380 (IAQTMNVTATVPYLLLSILLL). Residues 381–412 (RGISLPGANKGLTFLFTVDSTKLWKWQIWKSA) are Extracellular-facing. A helical transmembrane segment spans residues 413–433 (AEQVFYELGIDAGPLISMAAF). At 434-444 (SRYRNNIYRDS) the chain is on the cytoplasmic side. Residues 445–465 (VLLVIMDALTSCLSGMVIFSF) form a helical membrane-spanning segment. Residues 466-498 (VGFIASESNSNVNDVLKHDPLYLSFTVYPGVTS) are Extracellular-facing. The chain crosses the membrane as a helical span at residues 499–519 (FMYWGGLWATLFFGMLVLAAI). The Cytoplasmic segment spans residues 520–550 (DAEFAWLEMIASAFMNHFSMKNKAVENRLLA). The chain crosses the membrane as a helical span at residues 551 to 571 (FLCLAGFFLGLPLCAQGGIFV). Residues 572-584 (FHAIENLNANWNS) are Extracellular-facing. Residues 585-605 (FSLALLSVAIVCYVYGIDNYL) traverse the membrane as a helical segment. At 606-641 (TDISAMLRVPRIQISKATRLKEKLIYFFGPGGIYIK) the chain is on the cytoplasmic side. A helical transmembrane segment spans residues 642-662 (FSLCFICPVILTVLLVASVLG). The Extracellular segment spans residues 663–677 (YQRISFAGRPIPIDY). Residues 678–698 (EIVAWIVMIGPLLVVPLVAFM) form a helical membrane-spanning segment. The Cytoplasmic segment spans residues 699 to 1022 (QIRQIRNEGK…RPKPIDMPPK (324 aa)). Disordered stretches follow at residues 867 to 948 (RIPN…SSDD) and 995 to 1022 (IYDQEQKNGRSKVLSQLKRPKPIDMPPK). The segment covering 893–907 (SDPPVPTSPLPPPPK) has biased composition (pro residues). Low complexity predominate over residues 933-943 (DDSPSISNSSD).

This sequence belongs to the sodium:neurotransmitter symporter (SNF) (TC 2.A.22) family. As to quaternary structure, may interact with STAT family transcription factor sta-2; the interaction is probably direct.

Its subcellular location is the membrane. It localises to the cytoplasm. The protein localises to the vesicle. Probably mediates sodium-dependent uptake of unknown small molecule(s). By positively modulating expression, in the epidermis, of antimicrobial peptides such as nlp-29, plays a role in resistance to fungal infection and in the response to physical wounding and phorbol ester PMA treatment. Role in response to wounding of the epidermis may be facilitated by recruitment of snf-12 to the wound site by microtubule-dependent vesicle trafficking. Functions cell autonomously in the epidermis, in concert with STAT transcription factor sta-2, probably acting at vesicular membranes, downstream of a p38 MAPK/pmk-1 pathway. The polypeptide is Sodium-dependent transporter snf-12 (Caenorhabditis elegans).